The following is a 902-amino-acid chain: Androgen receptor (902 aa).

Positions 1-540 (MEVQLGLGRV…PIDYYFPPQK (540 aa)) are modulating. An interaction with ZNF318 region spans residues 1-569 (MEVQLGLGRV…GSCKVFFKRA (569 aa)). Disordered regions lie at residues 35 to 146 (QNPG…LSLL) and 194 to 224 (QQEV…YLGG). At S61 the chain carries Phosphoserine; by CDK9. S75 carries the phosphoserine modification. Over residues 94-103 (QPSQQQSASE) the composition is skewed to low complexity. Composition is skewed to polar residues over residues 196-205 (EVISEGSSSV) and 213-224 (APSSSKDSYLGG). Y221 is subject to Phosphotyrosine; by CSK. S254 bears the Phosphoserine mark. Y265 bears the Phosphotyrosine; by CSK and TNK2 mark. S290 is modified (phosphoserine). Y305, Y344, Y355, and Y360 each carry phosphotyrosine; by CSK. Y361 carries the post-translational modification Phosphotyrosine; by CSK and TNK2. A Glycyl lysine isopeptide (Lys-Gly) (interchain with G-Cter in SUMO) cross-link involves residue K384. Residue Y391 is modified to Phosphotyrosine; by CSK. The segment at 439 to 465 (EGQLYGPGGGGGSSSPSDAGPVAPYGY) is disordered. K503 is covalently cross-linked (Glycyl lysine isopeptide (Lys-Gly) (interchain with G-Cter in SUMO)). Phosphotyrosine; by CSK occurs at positions 517 and 534. Residues 534-901 (YYFPPQKTCL…GKVKPIYFHT (368 aa)) form an interaction with LPXN region. Residues 541–614 (TCLICGDEAS…AGMTLGARKL (74 aa)) constitute a DNA-binding region (nuclear receptor). 2 consecutive NR C4-type zinc fingers follow at residues 542-562 (CLIC…CGSC) and 578-602 (CASR…LRKC). The interval 554–644 (YGALTCGSCK…TEDPSQKMTV (91 aa)) is interaction with HIPK3. The segment at 574–901 (QKYLCASRND…GKVKPIYFHT (328 aa)) is interaction with CCAR1. An interaction with KAT7 region spans residues 607 to 901 (MTLGARKLKK…GKVKPIYFHT (295 aa)). S633 carries the post-translational modification Phosphoserine. Residues 651 to 882 (ECQPIFLNVL…DFPEMMAEII (232 aa)) form the NR LBD domain. Residues N688 and R735 each coordinate 17beta-hydroxy-5alpha-androstan-3-one. Residues K828 and K830 each participate in a glycyl lysine isopeptide (Lys-Gly) (interchain with G-Cter in ubiquitin) cross-link. Residue T860 participates in 17beta-hydroxy-5alpha-androstan-3-one binding. Position 898 is a phosphotyrosine; by CSK (Y898).

Belongs to the nuclear hormone receptor family. NR3 subfamily. As to quaternary structure, binds DNA as a homodimer. Part of a ternary complex containing AR, EFCAB6/DJBP and PARK7. Interacts with HIPK3 and NR0B2 in the presence of androgen. The ligand binding domain interacts with KAT7/HBO1 in the presence of dihydrotestosterone. Interacts with EFCAB6/DJBP, PQBP1, RANBP9, RBAK, SPDEF, SRA1, TGFB1I1, ZNF318 and RREB1. Interacts with ZMIZ1/ZIMP10 and ZMIZ2/ZMIP7 which both enhance its transactivation activity. Interacts with SLC30A9 and RAD54L2/ARIP4. Interacts with MACROD1 (via macro domain). Interacts via the ligand-binding domain with LXXLL and FXXLF motifs from NCOA1, NCOA2, NCOA3 and MAGEA11. Interacts (via nuclear receptor DNA binding domain and nuclear receptor ligand binding domain) with NCOA4. The AR N-terminal poly-Gln region binds Ran resulting in enhancement of AR-mediated transactivation. Ran-binding decreases as the poly-Gln length increases. Interacts with HIP1 (via coiled coil domain). Interacts (via ligand-binding domain) with TRIM68. Interacts with TNK2. Interacts with USP26. Interacts with RNF6. Interacts (regulated by RNF6 probably through polyubiquitination) with RNF14; regulates AR transcriptional activity. Interacts with PRMT2 and TRIM24. Interacts with RACK1. Interacts with RANBP10; this interaction enhances dihydrotestosterone-induced AR transcriptional activity. Interacts with PRPF6 in a hormone-independent way; this interaction enhances dihydrotestosterone-induced AR transcriptional activity. Interacts with STK4/MST1. Interacts with ZIPK/DAPK3. Interacts with LPXN. Interacts with MAK. Part of a complex containing AR, MAK and NCOA3. Interacts with CRY1. Interacts with CCAR1 and GATA2. Interacts with BUD31. Interacts with ARID4A. Interacts with ARID4B. Interacts (via NR LBD domain) with ZBTB7A; the interaction is direct and androgen-dependent. Interacts with NCOR1. Interacts with NCOR2. Interacts with CRY2 in a ligand-dependent manner. Post-translationally, phosphorylated in prostate cancer cells in response to several growth factors including EGF. Phosphorylation is induced by c-Src kinase (CSK). Tyr-517 is one of the major phosphorylation sites and an increase in phosphorylation and Src kinase activity is associated with prostate cancer progression. Phosphorylation by TNK2 enhances the DNA-binding and transcriptional activity. Phosphorylation at Ser-61 by CDK9 regulates AR promoter selectivity and cell growth. Phosphorylation by PAK6 leads to AR-mediated transcription inhibition. Sumoylated on Lys-384 (major) and Lys-503. Ubiquitinated. Deubiquitinated by USP26. 'Lys-6' and 'Lys-27'-linked polyubiquitination by RNF6 modulates AR transcriptional activity and specificity. In terms of processing, palmitoylated by ZDHHC7 and ZDHHC21. Palmitoylation is required for plasma membrane targeting and for rapid intracellular signaling via ERK and AKT kinases and cAMP generation. As to expression, highest levels in the seminal vesicle, ventral prostate and coagulating gland with lower levels in the kidney and levator ani muscle.

The protein resides in the nucleus. It localises to the cytoplasm. In terms of biological role, steroid hormone receptors are ligand-activated transcription factors that regulate eukaryotic gene expression and affect cellular proliferation and differentiation in target tissues. Transcription factor activity is modulated by bound coactivator and corepressor proteins like ZBTB7A that recruits NCOR1 and NCOR2 to the androgen response elements/ARE on target genes, negatively regulating androgen receptor signaling and androgen-induced cell proliferation. Transcription activation is also down-regulated by NR0B2. Activated, but not phosphorylated, by HIPK3 and ZIPK/DAPK3. This is Androgen receptor (Ar) from Rattus norvegicus (Rat).